The following is a 409-amino-acid chain: Histone deacetylase 7 (409 aa).

Positions 11–324 (RVSYFYEPMI…WCYETAIAVG (314 aa)) are histone deacetylase. The Proton donor/acceptor role is filled by His-148. Asp-267 serves as a coordination point for Zn(2+). The segment at 383–409 (PFQDTPSSSQATEAAEVDMEKRNDPRI) is disordered. Over residues 384–394 (FQDTPSSSQAT) the composition is skewed to polar residues. A compositionally biased stretch (basic and acidic residues) spans 400–409 (DMEKRNDPRI).

It belongs to the histone deacetylase family. HD type 1 subfamily. The cofactor is Zn(2+). As to expression, low expression in flowers.

It is found in the nucleus. The enzyme catalyses N(6)-acetyl-L-lysyl-[histone] + H2O = L-lysyl-[histone] + acetate. Functionally, responsible for the deacetylation of lysine residues on the N-terminal part of the core histones (H2A, H2B, H3 and H4). Histone deacetylation gives a tag for epigenetic repression and plays an important role in transcriptional regulation, cell cycle progression and developmental events. May be involved in flowering induction. Histone deacetylases act via the formation of large multiprotein complexes. In Arabidopsis thaliana (Mouse-ear cress), this protein is Histone deacetylase 7 (HDA7).